The chain runs to 340 residues: MKQEVHRIQEETLAELQQVSTLEALQELKVKVLGKKGSLTAQLRKMGGLSPEERPIFGQVVNETRDILEAAWIRREEELSQTAMLKQLEEEKLDISLPGVSLPQGHQHPLTKVIEEIEEIFLGMGFQIAEGPEIESDYYNFEALNLPKDHPAREMQDSFYITEEILLRTQTSPVQIRTMEKQRPQLPVKIICPGKVYRNDDDATHSPMFHQVEGLMVDRRIRMSDLKGILLSFSRMMFGESREIRLRPSFFPFTEPSAEVDVSCMLCGGAGCRICKGTGWIEILGSGMVHPRVLEMGGYDSKELTGFAFGMGVERIAMLKYGIEDMRLLFDNDLRFLQQF.

Residue Glu-255 participates in Mg(2+) binding.

This sequence belongs to the class-II aminoacyl-tRNA synthetase family. Phe-tRNA synthetase alpha subunit type 1 subfamily. Tetramer of two alpha and two beta subunits. Mg(2+) serves as cofactor.

Its subcellular location is the cytoplasm. It carries out the reaction tRNA(Phe) + L-phenylalanine + ATP = L-phenylalanyl-tRNA(Phe) + AMP + diphosphate + H(+). This chain is Phenylalanine--tRNA ligase alpha subunit, found in Desulfitobacterium hafniense (strain Y51).